The sequence spans 289 residues: Pantothenate synthetase (289 aa).

28–35 serves as a coordination point for ATP; that stretch reads MGCLHEGH. Catalysis depends on His35, which acts as the Proton donor. Gln59 is a (R)-pantoate binding site. Beta-alanine is bound at residue Gln59. ATP is bound at residue 147–150; sequence GLKD. Gln153 serves as a coordination point for (R)-pantoate. Residues Val176 and 184–187 each bind ATP; that span reads MSSR.

The protein belongs to the pantothenate synthetase family. Homodimer.

The protein localises to the cytoplasm. The catalysed reaction is (R)-pantoate + beta-alanine + ATP = (R)-pantothenate + AMP + diphosphate + H(+). It functions in the pathway cofactor biosynthesis; (R)-pantothenate biosynthesis; (R)-pantothenate from (R)-pantoate and beta-alanine: step 1/1. Catalyzes the condensation of pantoate with beta-alanine in an ATP-dependent reaction via a pantoyl-adenylate intermediate. The sequence is that of Pantothenate synthetase from Magnetococcus marinus (strain ATCC BAA-1437 / JCM 17883 / MC-1).